Consider the following 1071-residue polypeptide: ATP-dependent helicase/deoxyribonuclease subunit B (1071 aa).

This sequence belongs to the helicase family. AddB/RexB type 2 subfamily. Heterodimer of AddA and RexB. Mg(2+) serves as cofactor.

In terms of biological role, the heterodimer acts as both an ATP-dependent DNA helicase and an ATP-dependent, dual-direction single-stranded exonuclease. Recognizes the chi site generating a DNA molecule suitable for the initiation of homologous recombination. This subunit has 5' -&gt; 3' nuclease activity but not helicase activity. The chain is ATP-dependent helicase/deoxyribonuclease subunit B from Streptococcus pyogenes serotype M18 (strain MGAS8232).